A 189-amino-acid chain; its full sequence is Crossover junction endodeoxyribonuclease RuvC (189 aa).

Catalysis depends on residues Asp8, Glu67, and Asp139. Asp8, Glu67, and Asp139 together coordinate Mg(2+).

Belongs to the RuvC family. In terms of assembly, homodimer which binds Holliday junction (HJ) DNA. The HJ becomes 2-fold symmetrical on binding to RuvC with unstacked arms; it has a different conformation from HJ DNA in complex with RuvA. In the full resolvosome a probable DNA-RuvA(4)-RuvB(12)-RuvC(2) complex forms which resolves the HJ. Requires Mg(2+) as cofactor.

Its subcellular location is the cytoplasm. The catalysed reaction is Endonucleolytic cleavage at a junction such as a reciprocal single-stranded crossover between two homologous DNA duplexes (Holliday junction).. Its function is as follows. The RuvA-RuvB-RuvC complex processes Holliday junction (HJ) DNA during genetic recombination and DNA repair. Endonuclease that resolves HJ intermediates. Cleaves cruciform DNA by making single-stranded nicks across the HJ at symmetrical positions within the homologous arms, yielding a 5'-phosphate and a 3'-hydroxyl group; requires a central core of homology in the junction. The consensus cleavage sequence is 5'-(A/T)TT(C/G)-3'. Cleavage occurs on the 3'-side of the TT dinucleotide at the point of strand exchange. HJ branch migration catalyzed by RuvA-RuvB allows RuvC to scan DNA until it finds its consensus sequence, where it cleaves and resolves the cruciform DNA. In Histophilus somni (strain 129Pt) (Haemophilus somnus), this protein is Crossover junction endodeoxyribonuclease RuvC.